We begin with the raw amino-acid sequence, 213 residues long: Orotate phosphoribosyltransferase (213 aa).

5-phospho-alpha-D-ribose 1-diphosphate is bound at residue lysine 26. Orotate is bound at residue 34 to 35 (FF). 5-phospho-alpha-D-ribose 1-diphosphate contacts are provided by residues 72-73 (YK), arginine 99, lysine 100, lysine 103, histidine 105, and 124-132 (DDVITAGTA). Residues threonine 128 and arginine 156 each coordinate orotate.

It belongs to the purine/pyrimidine phosphoribosyltransferase family. PyrE subfamily. As to quaternary structure, homodimer. Mg(2+) is required as a cofactor.

It carries out the reaction orotidine 5'-phosphate + diphosphate = orotate + 5-phospho-alpha-D-ribose 1-diphosphate. Its pathway is pyrimidine metabolism; UMP biosynthesis via de novo pathway; UMP from orotate: step 1/2. Its function is as follows. Catalyzes the transfer of a ribosyl phosphate group from 5-phosphoribose 1-diphosphate to orotate, leading to the formation of orotidine monophosphate (OMP). The chain is Orotate phosphoribosyltransferase from Salmonella choleraesuis (strain SC-B67).